A 251-amino-acid polypeptide reads, in one-letter code: Small ribosomal subunit protein uS2 (251 aa).

It belongs to the universal ribosomal protein uS2 family.

The protein is Small ribosomal subunit protein uS2 of Deinococcus deserti (strain DSM 17065 / CIP 109153 / LMG 22923 / VCD115).